The following is a 1371-amino-acid chain: Probable serine/threonine-protein kinase DDB_G0293292 (1371 aa).

2 Protein kinase domains span residues 9–269 (NKIL…HPNT) and 1131–1371 (FKEV…QPTL). ATP-binding positions include 15-23 (IDDGNTKRK) and K39. D143 serves as the catalytic Proton acceptor.

It belongs to the protein kinase superfamily. Ser/Thr protein kinase family.

It catalyses the reaction L-seryl-[protein] + ATP = O-phospho-L-seryl-[protein] + ADP + H(+). The enzyme catalyses L-threonyl-[protein] + ATP = O-phospho-L-threonyl-[protein] + ADP + H(+). This Dictyostelium discoideum (Social amoeba) protein is Probable serine/threonine-protein kinase DDB_G0293292.